The following is a 144-amino-acid chain: 3-hydroxyacyl-[acyl-carrier-protein] dehydratase FabZ (144 aa).

The active site involves His-48.

This sequence belongs to the thioester dehydratase family. FabZ subfamily.

It is found in the cytoplasm. The enzyme catalyses a (3R)-hydroxyacyl-[ACP] = a (2E)-enoyl-[ACP] + H2O. Functionally, involved in unsaturated fatty acids biosynthesis. Catalyzes the dehydration of short chain beta-hydroxyacyl-ACPs and long chain saturated and unsaturated beta-hydroxyacyl-ACPs. The chain is 3-hydroxyacyl-[acyl-carrier-protein] dehydratase FabZ from Bacillus anthracis (strain A0248).